Consider the following 186-residue polypeptide: Crossover junction endodeoxyribonuclease RuvC (186 aa).

Catalysis depends on residues Asp14, Glu73, and Asp145. Mg(2+) is bound by residues Asp14, Glu73, and Asp145. Residues 162 to 186 form a disordered region; it reads GRSLPPSRGRRRSGSRQRWRDYRPS. Residues 169 to 178 show a composition bias toward basic residues; sequence RGRRRSGSRQ.

It belongs to the RuvC family. In terms of assembly, homodimer which binds Holliday junction (HJ) DNA. The HJ becomes 2-fold symmetrical on binding to RuvC with unstacked arms; it has a different conformation from HJ DNA in complex with RuvA. In the full resolvosome a probable DNA-RuvA(4)-RuvB(12)-RuvC(2) complex forms which resolves the HJ. Requires Mg(2+) as cofactor.

Its subcellular location is the cytoplasm. It carries out the reaction Endonucleolytic cleavage at a junction such as a reciprocal single-stranded crossover between two homologous DNA duplexes (Holliday junction).. In terms of biological role, the RuvA-RuvB-RuvC complex processes Holliday junction (HJ) DNA during genetic recombination and DNA repair. Endonuclease that resolves HJ intermediates. Cleaves cruciform DNA by making single-stranded nicks across the HJ at symmetrical positions within the homologous arms, yielding a 5'-phosphate and a 3'-hydroxyl group; requires a central core of homology in the junction. The consensus cleavage sequence is 5'-(A/T)TT(C/G)-3'. Cleavage occurs on the 3'-side of the TT dinucleotide at the point of strand exchange. HJ branch migration catalyzed by RuvA-RuvB allows RuvC to scan DNA until it finds its consensus sequence, where it cleaves and resolves the cruciform DNA. This is Crossover junction endodeoxyribonuclease RuvC from Chromohalobacter salexigens (strain ATCC BAA-138 / DSM 3043 / CIP 106854 / NCIMB 13768 / 1H11).